Consider the following 124-residue polypeptide: Histone H2A (124 aa).

The segment covering 1–18 (MSGRGKGGKVKGKAKSRS) has biased composition (basic residues). The interval 1–21 (MSGRGKGGKVKGKAKSRSNRA) is disordered. Ser2 carries the post-translational modification N-acetylserine. A Phosphoserine modification is found at Ser2. Position 36 is an N6-succinyllysine (Lys36). At Gln104 the chain carries N5-methylglutamine. Residue Lys119 forms a Glycyl lysine isopeptide (Lys-Gly) (interchain with G-Cter in ubiquitin) linkage. A Phosphothreonine modification is found at Thr120.

It belongs to the histone H2A family. As to quaternary structure, the nucleosome is a histone octamer containing two molecules each of H2A, H2B, H3 and H4 assembled in one H3-H4 heterotetramer and two H2A-H2B heterodimers. The octamer wraps approximately 147 bp of DNA. In terms of processing, the chromatin-associated form, but not the free cytoplasmic form, is phosphorylated on Thr-120 by NHK-1 during mitosis, and dephosphorylated during S-phase. Also phosphorylated on Thr-120 by NHK-1 during prophase I of meiosis; which is required for acetylation of H3 'Lys-14' and H4 'Lys-5', diassembly of the synaptonemal complex, and karyosome formation. Post-translationally, monoubiquitination of Lys-119 by sce/dRING gives a specific tag for epigenetic transcriptional repression. Phosphorylation on Ser-2 is enhanced during mitosis. Phosphorylation on Ser-2 directly represses transcription.

Its subcellular location is the nucleus. It is found in the chromosome. Functionally, core component of nucleosome. Nucleosomes wrap and compact DNA into chromatin, limiting DNA accessibility to the cellular machineries which require DNA as a template. Histones thereby play a central role in transcription regulation, DNA repair, DNA replication and chromosomal stability. DNA accessibility is regulated via a complex set of post-translational modifications of histones, also called histone code, and nucleosome remodeling. The sequence is that of Histone H2A (His2A) from Drosophila erecta (Fruit fly).